The primary structure comprises 512 residues: Monocarboxylate transporter 14 (512 aa).

Residues 1-29 are Cytoplasmic-facing; the sequence is MYTSHEDIGYDLEDDRKAKNKKTLKPHPD. 12 consecutive transmembrane segments (helical) span residues 30 to 50, 76 to 96, 105 to 125, 129 to 149, 161 to 181, 193 to 211, 317 to 337, 355 to 375, 381 to 401, 410 to 430, 446 to 466, and 476 to 496; these read IDGG…ILIM, WVSS…GLFI, AIIG…AANV, FITF…PAVV, LAQG…TVLL, AMFI…GALM, MFVA…IPFI, FPLT…LGAV, ISVW…IFLL, LAVI…MPVV, IIIC…GWIF, and FYIC…QPCI. The Cytoplasmic portion of the chain corresponds to 497–512; that stretch reads QMIDQSRRKCIEGAHV.

This sequence belongs to the major facilitator superfamily. Monocarboxylate porter (TC 2.A.1.13) family.

The protein localises to the cell membrane. Functionally, proton-linked monocarboxylate transporter. May catalyze the transport of monocarboxylates across the plasma membrane. The protein is Monocarboxylate transporter 14 (Slc16a14) of Mus musculus (Mouse).